The following is a 246-amino-acid chain: Sensory transduction protein LytT (246 aa).

The Response regulatory domain occupies 4–120 (HIMIAEDERL…RFKIAMNRIR (117 aa)). D55 is subject to 4-aspartylphosphate. One can recognise an HTH LytTR-type domain in the interval 136–243 (LVVNLDEKMM…AKGLFDALQG (108 aa)).

In terms of processing, phosphorylated by LytS.

The protein localises to the cytoplasm. Functionally, member of the two-component regulatory system LytS/LytT that probably regulates genes involved in cell wall metabolism. The sequence is that of Sensory transduction protein LytT (lytT) from Oceanobacillus iheyensis (strain DSM 14371 / CIP 107618 / JCM 11309 / KCTC 3954 / HTE831).